Consider the following 126-residue polypeptide: NADH-quinone oxidoreductase subunit A (126 aa).

3 helical membrane-spanning segments follow: residues 16–36 (ILVL…AAAI), 73–93 (ILFI…VAFG), and 95–115 (MSMT…VGFA).

Belongs to the complex I subunit 3 family. In terms of assembly, NDH-1 is composed of 14 different subunits. Subunits NuoA, H, J, K, L, M, N constitute the membrane sector of the complex.

It localises to the cell inner membrane. It carries out the reaction a quinone + NADH + 5 H(+)(in) = a quinol + NAD(+) + 4 H(+)(out). In terms of biological role, NDH-1 shuttles electrons from NADH, via FMN and iron-sulfur (Fe-S) centers, to quinones in the respiratory chain. The immediate electron acceptor for the enzyme in this species is believed to be ubiquinone. Couples the redox reaction to proton translocation (for every two electrons transferred, four hydrogen ions are translocated across the cytoplasmic membrane), and thus conserves the redox energy in a proton gradient. This Rhodobacter capsulatus (Rhodopseudomonas capsulata) protein is NADH-quinone oxidoreductase subunit A.